A 221-amino-acid polypeptide reads, in one-letter code: Carbonic anhydrase (221 aa).

Residues C38, D40, H99, and C102 each coordinate Zn(2+).

It belongs to the beta-class carbonic anhydrase family. Zn(2+) serves as cofactor.

It catalyses the reaction hydrogencarbonate + H(+) = CO2 + H2O. The chain is Carbonic anhydrase (cynT) from Helicobacter pylori (strain J99 / ATCC 700824) (Campylobacter pylori J99).